The chain runs to 142 residues: Hemoglobin subunit alpha-2 (142 aa).

Residues 2–142 form the Globin domain; the sequence is VLSAADKSNV…VSTVLTSKYR (141 aa). His59 serves as a coordination point for O2. His88 contributes to the heme b binding site.

It belongs to the globin family. Heterotetramer of two alpha chains and two beta chains.

In terms of biological role, involved in oxygen transport from the lung to the various peripheral tissues. Its function is as follows. Hemopressin acts as an antagonist peptide of the cannabinoid receptor CNR1. Hemopressin-binding efficiently blocks cannabinoid receptor CNR1 and subsequent signaling. This Capra hircus (Goat) protein is Hemoglobin subunit alpha-2 (HBA2).